We begin with the raw amino-acid sequence, 271 residues long: NADPH-dependent 7-cyano-7-deazaguanine reductase (271 aa).

Position 81–83 (isoleucine 81–serine 83) interacts with substrate. Position 83-84 (serine 83–lysine 84) interacts with NADPH. The Thioimide intermediate role is filled by cysteine 177. Residue aspartate 184 is the Proton donor of the active site. Histidine 216–glutamate 217 lines the substrate pocket. Arginine 245–glycine 246 is an NADPH binding site.

The protein belongs to the GTP cyclohydrolase I family. QueF type 2 subfamily. As to quaternary structure, homodimer.

It is found in the cytoplasm. The catalysed reaction is 7-aminomethyl-7-carbaguanine + 2 NADP(+) = 7-cyano-7-deazaguanine + 2 NADPH + 3 H(+). It participates in tRNA modification; tRNA-queuosine biosynthesis. In terms of biological role, catalyzes the NADPH-dependent reduction of 7-cyano-7-deazaguanine (preQ0) to 7-aminomethyl-7-deazaguanine (preQ1). The chain is NADPH-dependent 7-cyano-7-deazaguanine reductase from Xanthomonas axonopodis pv. citri (strain 306).